The following is a 561-amino-acid chain: MPESKYRQQTIRAPRGATLTAKSWLTEAPLRMLMNNLDPDVAENPHELVVYGGIGRAARNWECYDAIVDALTRLEADETLLIQSGKPVGVFKTHDNAPRVLIANSNLVPHWATWEHFNELDAKGLAMYGQMTAGSWIYIGSQGIVQGTYETFVEAGRQHYNGTLAGRWVLTAGLGGMGGAQPLAATLAGACSLTIECQQSRIDFRLRTRYVDEQAATLDDALARIAHYTRAGKAVSVALCANAADILPELVNRGVRPDLVTDQTSAHDPLHGYLPTGWRWEEYQEKALSDPQGTMQAAKRSMAAHVQAMLAFSKMGVPTFDYGNNIRQMAKEMGVENAFDFPGFVPAYIRPLFCRGIGPFRWVALSGDPQDIYKTDAKVKEIVAEDKHLHHWLDMARERIHFQGLPARICWVGLEWRQKLGLAFNEMVRCGEVSAPIVIGRDHLDSGSVASPNRETEAMRDGSDAVSDWPLLNALLNTASGATWVSLHHGGGVGMGFSQHAGMVIVCDGTDEAAARIRRVLHNDPATGVMRHADAGYDLAVECAVEQGLHLPMVAATQRKR.

NAD(+) is bound by residues 52-53 (GG), glutamine 130, 176-178 (GMG), glutamate 196, arginine 201, 242-243 (NA), 263-267 (QTSAH), 273-274 (YL), and tyrosine 322. Cysteine 410 is a catalytic residue. Glycine 492 contacts NAD(+).

This sequence belongs to the urocanase family. NAD(+) serves as cofactor.

The protein resides in the cytoplasm. The catalysed reaction is 4-imidazolone-5-propanoate = trans-urocanate + H2O. It participates in amino-acid degradation; L-histidine degradation into L-glutamate; N-formimidoyl-L-glutamate from L-histidine: step 2/3. Catalyzes the conversion of urocanate to 4-imidazolone-5-propionate. This chain is Urocanate hydratase, found in Salmonella arizonae (strain ATCC BAA-731 / CDC346-86 / RSK2980).